The primary structure comprises 685 residues: Putative lipase ROG1 (685 aa).

The active-site Charge relay system is S269.

Belongs to the putative lipase ROG1 family.

In Saccharomyces cerevisiae (strain ATCC 204508 / S288c) (Baker's yeast), this protein is Putative lipase ROG1 (ROG1).